We begin with the raw amino-acid sequence, 238 residues long: Histidine/lysine/arginine/ornithine transport system permease protein HisM (238 aa).

The Periplasmic portion of the chain corresponds to 1–26 (MIEILHEYWKPLLWTDGYRFTGVAIT). The ABC transmembrane type-1 domain maps to 23-221 (VAITLWLLIL…IISYVLISLF (199 aa)). Residues 27 to 47 (LWLLILSVVIGGVLALFLAIG) form a helical membrane-spanning segment. The Cytoplasmic portion of the chain corresponds to 48–58 (RVSSNKYIQFP). The chain crosses the membrane as a helical span at residues 59 to 79 (IWLFTYIFRGTPLYVQLLVFY). At 80–104 (SGMYTLEIVKGTEFLNAFFRSGLNC) the chain is on the periplasmic side. Residues 105–125 (TVLALTLNTCAYTTEIFAGAI) traverse the membrane as a helical segment. At 126 to 157 (RSVPHGEIEAARAYGFSTFKMYRCIILPSALR) the chain is on the cytoplasmic side. Residues 158 to 178 (IALPAYSNEVILMLHSTALAF) traverse the membrane as a helical segment. At 179–199 (TATVPDLLKIARDINAATYQP) the chain is on the periplasmic side. The helical transmembrane segment at 200–220 (FTAFGIAAVLYLIISYVLISL) threads the bilayer. The Cytoplasmic portion of the chain corresponds to 221–238 (FRRAEKRWLQHVKPSSTH).

This sequence belongs to the binding-protein-dependent transport system permease family. HisMQ subfamily. The HisPMQJ complex is composed of two ATP-binding proteins (HisP), two transmembrane proteins (HisM and HisQ) and a solute-binding protein (HisJ). The HisPMQ-ArgT complex is composed of two ATP-binding proteins (HisP), two transmembrane proteins (HisM and HisQ) and a solute-binding protein (ArgT).

The protein resides in the cell inner membrane. In terms of biological role, part of the ABC transporter complex HisPMQJ involved in histidine transport. Is also part of the ABC transporter complex HisPMQ-ArgT involved in lysine/arginine/ornithine transport. Probably responsible for the translocation of the substrate across the membrane. In Escherichia coli O157:H7, this protein is Histidine/lysine/arginine/ornithine transport system permease protein HisM (hisM).